The sequence spans 218 residues: MSETAPVAAPAVSAPGAKAAGKKPKKAAGGSKARKPAGPSVTELITKAVAASKERKGLSLAALKKALAAGGYDVEKNNSRIKLGLKSLVGKGTLVQTKGTGASGSFKLNKKPGETKEKATKKKPAAKPKKPAAKKPASAAKKPKKAAAVKKSPKKAKKPAAAATKKAAKSPKKAAKAGRPKKAAKSPAKAKAVKPKAAKPKAAKPKAAKAKKAAPKKK.

2 stretches are compositionally biased toward low complexity: residues 1–19 (MSET…GAKA) and 27–39 (AAGG…PAGP). Disordered stretches follow at residues 1–41 (MSET…GPSV) and 89–218 (VGKG…PKKK). Serine 2 carries the post-translational modification N-acetylserine. One can recognise an H15 domain in the interval 37-110 (AGPSVTELIT…GASGSFKLNK (74 aa)). 4 stretches are compositionally biased toward basic residues: residues 119–133 (ATKK…KPAA), 141–158 (KKPK…KAKK), 166–184 (KAAK…KKAA), and 191–218 (KAVK…PKKK).

The protein belongs to the histone H1/H5 family.

The protein resides in the nucleus. It localises to the chromosome. In terms of biological role, histones H1 are necessary for the condensation of nucleosome chains into higher-order structures. In Anas platyrhynchos (Mallard), this protein is Histone H1.